We begin with the raw amino-acid sequence, 376 residues long: Putative glutamate--cysteine ligase 2-1 (376 aa).

The protein belongs to the glutamate--cysteine ligase type 2 family. YbdK subfamily.

The enzyme catalyses L-cysteine + L-glutamate + ATP = gamma-L-glutamyl-L-cysteine + ADP + phosphate + H(+). Functionally, ATP-dependent carboxylate-amine ligase which exhibits weak glutamate--cysteine ligase activity. This is Putative glutamate--cysteine ligase 2-1 from Rubrobacter xylanophilus (strain DSM 9941 / JCM 11954 / NBRC 16129 / PRD-1).